Here is a 758-residue protein sequence, read N- to C-terminus: Probable TonB-dependent receptor NMB0964 (758 aa).

Positions 1–24 are cleaved as a signal peptide; sequence MAQTTLKPIVLSILLINTPLLAQA. Residues 50–161 form the TBDR plug domain; sequence LLHTSTASDK…VAGLVDVADG (112 aa). Residues 171–758 form the TBDR beta-barrel domain; the sequence is GVSGELGLRL…SFTGGVNVKF (588 aa). Residues 741 to 758 carry the TonB C-terminal box motif; that stretch reads SDTPQMGRSFTGGVNVKF.

The protein belongs to the TonB-dependent receptor family.

Its subcellular location is the cell outer membrane. Its function is as follows. Probable receptor, TonB-dependent. This is Probable TonB-dependent receptor NMB0964 from Neisseria meningitidis serogroup B (strain ATCC BAA-335 / MC58).